The chain runs to 413 residues: Glutaminase (413 aa).

The interval 23-307 (GELADYIPEL…LSDDMGLHLM (285 aa)) is glutaminase. Ser-65, Asn-114, Glu-160, Asn-167, Tyr-191, Tyr-243, and Val-261 together coordinate substrate. Residues 316-413 (AVRSITRDGD…SDGTICKERV (98 aa)) form the STAS domain.

It belongs to the glutaminase family. In terms of assembly, homotetramer.

The enzyme catalyses L-glutamine + H2O = L-glutamate + NH4(+). The protein is Glutaminase (glsA) of Corynebacterium glutamicum (strain ATCC 13032 / DSM 20300 / JCM 1318 / BCRC 11384 / CCUG 27702 / LMG 3730 / NBRC 12168 / NCIMB 10025 / NRRL B-2784 / 534).